Consider the following 154-residue polypeptide: MVKAVAVLRGDSKVSGTVTFEQDSESGPVTVTYDIKGNDPNAERGFHVHEFGDNTNGCTSAGPHFNPFKKNHGGPTDSERHVGDLGNVKTDSEGVAKGVLKDSLLKLTGDNSIVGRTVVIHGGEDDLGKGGHADSLKTGNAGPRPACGVIGLTA.

3 residues coordinate Cu cation: His-47, His-49, and His-64. A disulfide bridge links Cys-58 with Cys-147. A disordered region spans residues 62–89 (GPHFNPFKKNHGGPTDSERHVGDLGNVK). The Zn(2+) site is built by His-64, His-72, His-81, and Asp-84. His-121 provides a ligand contact to Cu cation. Arg-144 contributes to the substrate binding site.

This sequence belongs to the Cu-Zn superoxide dismutase family. Homodimer. Requires Cu cation as cofactor. Zn(2+) is required as a cofactor.

It localises to the cytoplasm. The enzyme catalyses 2 superoxide + 2 H(+) = H2O2 + O2. Destroys radicals which are normally produced within the cells and which are toxic to biological systems. This Yarrowia lipolytica (strain CLIB 122 / E 150) (Yeast) protein is Superoxide dismutase [Cu-Zn] (SOD1).